The primary structure comprises 315 residues: Ornithine carbamoyltransferase, anabolic (315 aa).

Carbamoyl phosphate-binding positions include 57–60 (STRT), Gln-84, Arg-108, and 135–138 (HPCQ). L-ornithine contacts are provided by residues Asn-166, Asp-230, and 234 to 235 (SM). Carbamoyl phosphate contacts are provided by residues 270–271 (CL) and Arg-298.

This sequence belongs to the aspartate/ornithine carbamoyltransferase superfamily. OTCase family. As to quaternary structure, homododecamer (tetramer of trimers).

It is found in the cytoplasm. The enzyme catalyses carbamoyl phosphate + L-ornithine = L-citrulline + phosphate + H(+). It functions in the pathway amino-acid biosynthesis; L-arginine biosynthesis; L-arginine from L-ornithine and carbamoyl phosphate: step 1/3. Inhibited by the bisubstrate delta-N-phosphonoacetyl-L-ornithine (PALO). Functionally, reversibly catalyzes the transfer of the carbamoyl group from carbamoyl phosphate (CP) to the N(epsilon) atom of ornithine (ORN) to produce L-citrulline, which is a substrate for argininosuccinate synthetase, the enzyme involved in the final step in arginine biosynthesis. The sequence is that of Ornithine carbamoyltransferase, anabolic from Pyrococcus furiosus (strain ATCC 43587 / DSM 3638 / JCM 8422 / Vc1).